The sequence spans 82 residues: Putative membrane protein insertion efficiency factor (82 aa).

It belongs to the UPF0161 family.

It localises to the cell inner membrane. Its function is as follows. Could be involved in insertion of integral membrane proteins into the membrane. The chain is Putative membrane protein insertion efficiency factor from Rickettsia peacockii (strain Rustic).